The chain runs to 241 residues: Aspartate/glutamate leucyltransferase (241 aa).

It belongs to the R-transferase family. Bpt subfamily.

It localises to the cytoplasm. The catalysed reaction is N-terminal L-glutamyl-[protein] + L-leucyl-tRNA(Leu) = N-terminal L-leucyl-L-glutamyl-[protein] + tRNA(Leu) + H(+). It carries out the reaction N-terminal L-aspartyl-[protein] + L-leucyl-tRNA(Leu) = N-terminal L-leucyl-L-aspartyl-[protein] + tRNA(Leu) + H(+). Functions in the N-end rule pathway of protein degradation where it conjugates Leu from its aminoacyl-tRNA to the N-termini of proteins containing an N-terminal aspartate or glutamate. The chain is Aspartate/glutamate leucyltransferase from Parvibaculum lavamentivorans (strain DS-1 / DSM 13023 / NCIMB 13966).